The primary structure comprises 499 residues: Cytochrome P450 monooxygenase notH' (499 aa).

A helical transmembrane segment spans residues 11–31 (LGLEPAGWALALLTSSIIYLF). N-linked (GlcNAc...) asparagine glycans are attached at residues N296 and N427. C440 lines the heme pocket.

It belongs to the cytochrome P450 family. The cofactor is heme.

The protein localises to the membrane. The protein operates within alkaloid biosynthesis. Functionally, cytochrome P450 monooxygenase; part of the gene cluster that mediates the biosynthesis of notoamide, a fungal indole alkaloid that belongs to a family of natural products containing a characteristic bicyclo[2.2.2]diazaoctane core. The first step of notoamide biosynthesis involves coupling of L-proline and L-tryptophan by the bimodular NRPS notE', to produce cyclo-L-tryptophan-L-proline called brevianamide F. The reverse prenyltransferase notF' then acts as a deoxybrevianamide E synthase and converts brevianamide F to deoxybrevianamide E via reverse prenylation at C-2 of the indole ring leading to the bicyclo[2.2.2]diazaoctane core. Deoxybrevianamide E is further hydroxylated at C-6 of the indole ring, likely catalyzed by the cytochrome P450 monooxygenase notG', to yield 6-hydroxy-deoxybrevianamide E. 6-hydroxy-deoxybrevianamide E is a specific substrate of the prenyltransferase notC' for normal prenylation at C-7 to produce 6-hydroxy-7-prenyl-deoxybrevianamide, also called notoamide S. As the proposed pivotal branching point in notoamide biosynthesis, notoamide S can be diverted to notoamide E through an oxidative pyran ring closure putatively catalyzed by either notH' cytochrome P450 monooxygenase or the notD' FAD-linked oxidoreductase. This step would be followed by an indole 2,3-epoxidation-initiated pinacol-like rearrangement catalyzed by the notB' FAD-dependent monooxygenase leading to the formation of notoamide C and notoamide D. On the other hand notoamide S is converted to notoamide T by notH' (or notD'), a bifunctional oxidase that also functions as the intramolecular Diels-Alderase responsible for generation of (-)-notoamide T. To generate antipodal (+)-notoaminide T, notH (or notD) in Aspergillus strain MF297-2 is expected to catalyze a Diels-Alder reaction leading to the opposite stereochemistry. The remaining oxidoreductase notD' (or notH') likely catalyzes the oxidative pyran ring formation to yield (-)-stephacidin A. The FAD-dependent monooxygenase notI' is highly similar to notB' and is predicted to catalyze a similar conversion from (-)-stephacidin A to (+)-notoamide B via the 2,3-epoxidation of (-)-stephacidin A followed by a pinacol-type rearrangement. Finally, it remains unclear which enzyme could be responsible for the final hydroxylation steps leading to notoamide A and sclerotiamide. This is Cytochrome P450 monooxygenase notH' from Aspergillus versicolor.